The sequence spans 391 residues: Squalene synthase 8 (391 aa).

Belongs to the phytoene/squalene synthase family. It depends on Mg(2+) as a cofactor. Requires Mn(2+) as cofactor.

The protein resides in the endoplasmic reticulum. The catalysed reaction is 2 (2E,6E)-farnesyl diphosphate + NADH + H(+) = squalene + 2 diphosphate + NAD(+). It catalyses the reaction 2 (2E,6E)-farnesyl diphosphate + NADPH + H(+) = squalene + 2 diphosphate + NADP(+). The protein operates within terpene metabolism; lanosterol biosynthesis; lanosterol from farnesyl diphosphate: step 1/3. Functionally, component of the triterpene saponins (e.g. ginsenosides or panaxosides) and phytosterols biosynthetic pathways. Catalyzes the biosynthesis of squalene. This Panax ginseng (Korean ginseng) protein is Squalene synthase 8.